The sequence spans 400 residues: NADPH dehydrogenase 3 (400 aa).

FMN is bound by residues T38 and Q115. H192 and N195 together coordinate substrate. Y197 acts as the Proton donor in catalysis. FMN contacts are provided by R244 and R349. Y376 serves as a coordination point for substrate.

In terms of assembly, homodimer or heterodimer with OYE2. The cofactor is FMN.

The enzyme catalyses A + NADPH + H(+) = AH2 + NADP(+). In terms of biological role, flavin-dependent enoate reductase that catalyzes the chemo- and stereoslective hydrogenation of electron-poor alkenes. The enzyme is reduced by NADPH, and oxygen, quinones, and alpha,beta-unsaturated aldehydes and ketones can act as electron acceptors to complete catalytic turnover. The physiological oxidant remains elusive. Has a prooxidant activity, increasing reactive oxygen species (ROS) levels when overexpressed. Formation of OYE2-OYE3 heterodimers contribute to the induction of programmed cell death upon oxidative stress. The protein is NADPH dehydrogenase 3 of Saccharomyces cerevisiae (strain ATCC 204508 / S288c) (Baker's yeast).